A 117-amino-acid polypeptide reads, in one-letter code: Small ribosomal subunit protein bS6 (117 aa).

The interval 96–117 (HAEGPSVQMQKRDERDSRRERR) is disordered. The segment covering 105 to 117 (QKRDERDSRRERR) has biased composition (basic and acidic residues).

It belongs to the bacterial ribosomal protein bS6 family.

Its function is as follows. Binds together with bS18 to 16S ribosomal RNA. This chain is Small ribosomal subunit protein bS6, found in Ruegeria pomeroyi (strain ATCC 700808 / DSM 15171 / DSS-3) (Silicibacter pomeroyi).